Reading from the N-terminus, the 447-residue chain is Phosphoglucosamine mutase (447 aa).

Catalysis depends on Ser101, which acts as the Phosphoserine intermediate. Residues Ser101, Asp242, Asp244, and Asp246 each contribute to the Mg(2+) site. Ser101 is subject to Phosphoserine.

Belongs to the phosphohexose mutase family. Mg(2+) is required as a cofactor. Post-translationally, activated by phosphorylation.

It carries out the reaction alpha-D-glucosamine 1-phosphate = D-glucosamine 6-phosphate. In terms of biological role, catalyzes the conversion of glucosamine-6-phosphate to glucosamine-1-phosphate. This Azorhizobium caulinodans (strain ATCC 43989 / DSM 5975 / JCM 20966 / LMG 6465 / NBRC 14845 / NCIMB 13405 / ORS 571) protein is Phosphoglucosamine mutase.